The sequence spans 233 residues: Superoxide dismutase [Mn] 3.3, mitochondrial (233 aa).

The transit peptide at 1 to 29 directs the protein to the mitochondrion; sequence MALRTLASKNALSFALGGAARPSAESARG. Mn(2+)-binding residues include His57, His105, Asp194, and His198.

This sequence belongs to the iron/manganese superoxide dismutase family. Homotetramer. Mn(2+) serves as cofactor. Predominantly expressed in the embryo late in embryogenesis.

The protein localises to the mitochondrion matrix. It catalyses the reaction 2 superoxide + 2 H(+) = H2O2 + O2. Its function is as follows. Destroys superoxide anion radicals which are normally produced within the cells and which are toxic to biological systems. This chain is Superoxide dismutase [Mn] 3.3, mitochondrial (SODA.2), found in Zea mays (Maize).